A 365-amino-acid polypeptide reads, in one-letter code: Ribosomal RNA large subunit methyltransferase F (365 aa).

The segment at 1–48 (MSKPAVKSVQSATAKTATRAVNIRQKVKAPKQAKPEGKGSTKPVKDRP) is disordered. Basic and acidic residues predominate over residues 33-48 (AKPEGKGSTKPVKDRP).

Belongs to the methyltransferase superfamily. METTL16/RlmF family.

Its subcellular location is the cytoplasm. The catalysed reaction is adenosine(1618) in 23S rRNA + S-adenosyl-L-methionine = N(6)-methyladenosine(1618) in 23S rRNA + S-adenosyl-L-homocysteine + H(+). In terms of biological role, specifically methylates the adenine in position 1618 of 23S rRNA. The chain is Ribosomal RNA large subunit methyltransferase F from Shewanella baltica (strain OS223).